A 322-amino-acid polypeptide reads, in one-letter code: 4-hydroxy-3-methylbut-2-enyl diphosphate reductase (322 aa).

Cys-15 serves as a coordination point for [4Fe-4S] cluster. (2E)-4-hydroxy-3-methylbut-2-enyl diphosphate-binding residues include His-44 and His-77. 2 residues coordinate dimethylallyl diphosphate: His-44 and His-77. Isopentenyl diphosphate is bound by residues His-44 and His-77. Cys-99 provides a ligand contact to [4Fe-4S] cluster. Residue His-127 participates in (2E)-4-hydroxy-3-methylbut-2-enyl diphosphate binding. Residue His-127 participates in dimethylallyl diphosphate binding. His-127 is a binding site for isopentenyl diphosphate. Catalysis depends on Glu-129, which acts as the Proton donor. Residue Thr-168 coordinates (2E)-4-hydroxy-3-methylbut-2-enyl diphosphate. Cys-198 contacts [4Fe-4S] cluster. 4 residues coordinate (2E)-4-hydroxy-3-methylbut-2-enyl diphosphate: Ser-226, Ser-227, Asn-228, and Ser-270. Dimethylallyl diphosphate contacts are provided by Ser-226, Ser-227, Asn-228, and Ser-270. The isopentenyl diphosphate site is built by Ser-226, Ser-227, Asn-228, and Ser-270.

The protein belongs to the IspH family. It depends on [4Fe-4S] cluster as a cofactor.

The enzyme catalyses isopentenyl diphosphate + 2 oxidized [2Fe-2S]-[ferredoxin] + H2O = (2E)-4-hydroxy-3-methylbut-2-enyl diphosphate + 2 reduced [2Fe-2S]-[ferredoxin] + 2 H(+). The catalysed reaction is dimethylallyl diphosphate + 2 oxidized [2Fe-2S]-[ferredoxin] + H2O = (2E)-4-hydroxy-3-methylbut-2-enyl diphosphate + 2 reduced [2Fe-2S]-[ferredoxin] + 2 H(+). It participates in isoprenoid biosynthesis; dimethylallyl diphosphate biosynthesis; dimethylallyl diphosphate from (2E)-4-hydroxy-3-methylbutenyl diphosphate: step 1/1. The protein operates within isoprenoid biosynthesis; isopentenyl diphosphate biosynthesis via DXP pathway; isopentenyl diphosphate from 1-deoxy-D-xylulose 5-phosphate: step 6/6. In terms of biological role, catalyzes the conversion of 1-hydroxy-2-methyl-2-(E)-butenyl 4-diphosphate (HMBPP) into a mixture of isopentenyl diphosphate (IPP) and dimethylallyl diphosphate (DMAPP). Acts in the terminal step of the DOXP/MEP pathway for isoprenoid precursor biosynthesis. The protein is 4-hydroxy-3-methylbut-2-enyl diphosphate reductase of Neisseria meningitidis serogroup A / serotype 4A (strain DSM 15465 / Z2491).